A 99-amino-acid chain; its full sequence is High mobility group nucleosome-binding domain-containing protein 3 (99 aa).

Composition is skewed to basic and acidic residues over residues 1–25 (MPKRKSPENTEDKDGSKVTKQEPTR), 39–53 (PEPKPRKTSAKKEPG), and 62–72 (GKKEEKQEAGK). Positions 1–99 (MPKRKSPENT…KTESVDNEGE (99 aa)) are disordered. Residue serine 6 is modified to Phosphoserine. Threonine 10 bears the Phosphothreonine mark. 2 positions are modified to phosphoserine: serine 78 and serine 93. Positions 81–93 (GETKAEEAQKTES) are enriched in basic and acidic residues.

This sequence belongs to the HMGN family. Interacts with the ligand binding domain of the thyroid receptor (TR) (in vitro). Requires the presence of thyroid hormone for its interaction. Interacts with transcriptional regulator SEHBP. Interacts with nucleosomes.

Its subcellular location is the nucleus. Its function is as follows. Binds to nucleosomes, regulating chromatin structure and consequently, chromatin-dependent processes such as transcription, DNA replication and DNA repair. Affects both insulin and glucagon levels and modulates the expression of pancreatic genes involved in insulin secretion. Regulates the expression of the glucose transporter SLC2A2 by binding specifically to its promoter region and recruiting PDX1 and additional transcription factors. Regulates the expression of SLC6A9, a glycine transporter which regulates the glycine concentration in synaptic junctions in the central nervous system, by binding to its transcription start site. May play a role in ocular development and astrocyte function. The sequence is that of High mobility group nucleosome-binding domain-containing protein 3 (HMGN3) from Pongo abelii (Sumatran orangutan).